The chain runs to 368 residues: MSTKRVLCKFFMHGACLKGEYCEFSHDWNDQPNNVCTFYQKGSCSYGSRCRYDHVKVSRNPTVAPPPSSSTTTRASSSLQPLSFGRPHHVGYQADSSNPRQQISMDVLAHSGSKPVWRNDFQHESVLEDGIDWSISPTVQNQTTLSPADLPICSFAAGGNCPYGEECPQMHGDLCTTCGKMCLHPYRPDEREEHTKLCEKNHKRLESLKRSQEIECSVCLDRVLSKPTAAERKFGLLSECDHPFCISCIRNWRNNSPTSGMDVNSALRACPICRKLSYYVIPSVLWYFSKEEKLEIIDNYKAKLKSIDCKYFDFGTGTCPFGSSCFYKHAYRDGRLEEVILRHLDADDGSTVIAKNIRLSDFLSRLHL.

C3H1-type zinc fingers lie at residues 2 to 29 (STKR…HDWN) and 30 to 57 (DQPN…HVKV). The segment at 58-81 (SRNPTVAPPPSSSTTTRASSSLQP) is disordered. Residues 69–78 (SSTTTRASSS) show a composition bias toward low complexity. The C3H1-type 3 zinc-finger motif lies at 147 to 174 (PADLPICSFAAGGNCPYGEECPQMHGDL). A makorin-type Cys-His region spans residues 175-202 (CTTCGKMCLHPYRPDEREEHTKLCEKNH). An RING-type zinc finger spans residues 216 to 274 (CSVCLDRVLSKPTAAERKFGLLSECDHPFCISCIRNWRNNSPTSGMDVNSALRACPICR). Residues 303–332 (KLKSIDCKYFDFGTGTCPFGSSCFYKHAYR) form a C3H1-type 4 zinc finger.

Expressed in primary roots and leaves. Detected in vascular bundle tissues.

The enzyme catalyses S-ubiquitinyl-[E2 ubiquitin-conjugating enzyme]-L-cysteine + [acceptor protein]-L-lysine = [E2 ubiquitin-conjugating enzyme]-L-cysteine + N(6)-ubiquitinyl-[acceptor protein]-L-lysine.. The protein operates within protein modification; protein ubiquitination. Its function is as follows. E3 ubiquitin ligase catalyzing the covalent attachment of ubiquitin moieties onto substrate proteins. This Oryza sativa subsp. japonica (Rice) protein is E3 ubiquitin-protein ligase makorin (MKRN).